Here is a 244-residue protein sequence, read N- to C-terminus: MSMLCYTLIIAFLIGIWAAPKSEDNVPLGSPATSDLSDTSCAQTHEGLKTSRNTDQRHPAPKKAEDQELGSVANIIVDPKLFQKRRFQSSRVLFSTQPPPLSRDEQSVEFLDNEDTLNRNIRAKRENHPVHNQGEHSVCDSVSDWVIKTTATDIRGNMVTVMVDINRDNEVYKQYFFETKCRNPNPNPVQSECRGIDSRLWNSYCTTTRTFVRALTMEGNQASWRFIRIDTACVCVIIRKTDNF.

Positions 1-18 (MSMLCYTLIIAFLIGIWA) are cleaved as a signal peptide. Positions 19–125 (APKSEDNVPL…TLNRNIRAKR (107 aa)) are excised as a propeptide. Residues 47–66 (GLKTSRNTDQRHPAPKKAED) show a composition bias toward basic and acidic residues. The interval 47 to 67 (GLKTSRNTDQRHPAPKKAEDQ) is disordered. Intrachain disulfides connect C139/C205, C181/C233, and C193/C235.

It belongs to the NGF-beta family. As to quaternary structure, homodimer; non-covalently linked. Expressed by the venom gland.

The protein localises to the secreted. Nerve growth factor is important for the development and maintenance of the sympathetic and sensory nervous systems. It stimulates division and differentiation of sympathetic and embryonic sensory neurons as well as basal forebrain cholinergic neurons in the brain. Its relevance in the snake venom is not clear. However, it has been shown to inhibit metalloproteinase-dependent proteolysis of platelet glycoprotein Ib alpha, suggesting a metalloproteinase inhibition to prevent metalloprotease autodigestion and/or protection against prey proteases. Binds a lipid between the two protein chains in the homodimer. The lipid-bound form promotes histamine relase from mouse mast cells, contrary to the lipid-free form. The chain is Venom nerve growth factor 3 from Notechis scutatus scutatus (Mainland tiger snake).